We begin with the raw amino-acid sequence, 137 residues long: Endoribonuclease YbeY (137 aa).

Positions 103, 107, and 113 each coordinate Zn(2+).

The protein belongs to the endoribonuclease YbeY family. Zn(2+) serves as cofactor.

It is found in the cytoplasm. In terms of biological role, single strand-specific metallo-endoribonuclease involved in late-stage 70S ribosome quality control and in maturation of the 3' terminus of the 16S rRNA. This Acholeplasma laidlawii (strain PG-8A) protein is Endoribonuclease YbeY.